The chain runs to 460 residues: Acetyl-coenzyme A carboxylase carboxyl transferase subunit beta, chloroplastic (460 aa).

The region spanning 179 to 460 (LWVQCESCYG…GFFPLTQNGN (282 aa)) is the CoA carboxyltransferase N-terminal domain. Zn(2+)-binding residues include Cys183, Cys186, Cys202, and Cys205. Residues 183 to 205 (CESCYGLNYKKFFKSKMNICEHC) form a C4-type zinc finger.

The protein belongs to the AccD/PCCB family. In terms of assembly, acetyl-CoA carboxylase is a heterohexamer composed of biotin carboxyl carrier protein, biotin carboxylase and 2 subunits each of ACCase subunit alpha and ACCase plastid-coded subunit beta (accD). It depends on Zn(2+) as a cofactor.

It localises to the plastid. The protein localises to the chloroplast stroma. The catalysed reaction is N(6)-carboxybiotinyl-L-lysyl-[protein] + acetyl-CoA = N(6)-biotinyl-L-lysyl-[protein] + malonyl-CoA. The protein operates within lipid metabolism; malonyl-CoA biosynthesis; malonyl-CoA from acetyl-CoA: step 1/1. In terms of biological role, component of the acetyl coenzyme A carboxylase (ACC) complex. Biotin carboxylase (BC) catalyzes the carboxylation of biotin on its carrier protein (BCCP) and then the CO(2) group is transferred by the transcarboxylase to acetyl-CoA to form malonyl-CoA. This is Acetyl-coenzyme A carboxylase carboxyl transferase subunit beta, chloroplastic from Cicer arietinum (Chickpea).